Consider the following 202-residue polypeptide: Ribonuclease HII (202 aa).

One can recognise an RNase H type-2 domain in the interval 18 to 202; that stretch reads TYICGVDEAG…FAPVAKLLKQ (185 aa). Residues Asp24, Glu25, and Asp116 each coordinate a divalent metal cation.

Belongs to the RNase HII family. Mn(2+) is required as a cofactor. Requires Mg(2+) as cofactor.

The protein resides in the cytoplasm. It catalyses the reaction Endonucleolytic cleavage to 5'-phosphomonoester.. Its function is as follows. Endonuclease that specifically degrades the RNA of RNA-DNA hybrids. The polypeptide is Ribonuclease HII (Acholeplasma laidlawii (strain PG-8A)).